Consider the following 571-residue polypeptide: Putative pyruvate decarboxylase C13A11.06 (571 aa).

Positions 29 and 118 each coordinate pyruvate. Residues Thr395 and 418–420 (GSI) each bind thiamine diphosphate. Residue Asp450 participates in Mg(2+) binding. Thiamine diphosphate is bound by residues 451-452 (GS) and 477-482 (NDGYTI). The Mg(2+) site is built by Asn477 and Gly479. Residue Glu483 participates in pyruvate binding.

This sequence belongs to the TPP enzyme family. As to quaternary structure, homotetramer. The cofactor is Mg(2+). Requires thiamine diphosphate as cofactor.

It catalyses the reaction a 2-oxocarboxylate + H(+) = an aldehyde + CO2. It carries out the reaction pyruvate + H(+) = acetaldehyde + CO2. The chain is Putative pyruvate decarboxylase C13A11.06 from Schizosaccharomyces pombe (strain 972 / ATCC 24843) (Fission yeast).